Reading from the N-terminus, the 360-residue chain is Pyrimidine monooxygenase RutA (360 aa).

Residues 49 to 50 (IK), N115, E124, 140 to 141 (RY), and S190 contribute to the FMN site.

This sequence belongs to the NtaA/SnaA/DszA monooxygenase family. RutA subfamily.

It catalyses the reaction uracil + FMNH2 + NADH + O2 = (Z)-3-ureidoacrylate + FMN + NAD(+) + H2O + H(+). The catalysed reaction is thymine + FMNH2 + NADH + O2 = (Z)-2-methylureidoacrylate + FMN + NAD(+) + H2O + H(+). In terms of biological role, catalyzes the pyrimidine ring opening between N-3 and C-4 by an unusual flavin hydroperoxide-catalyzed mechanism, adding oxygen atoms in the process to yield ureidoacrylate peracid, that immediately reacts with FMN forming ureidoacrylate and FMN-N(5)-oxide. The FMN-N(5)-oxide reacts spontaneously with NADH to produce FMN. Requires the flavin reductase RutF to regenerate FMN in vivo. In Bradyrhizobium sp. (strain BTAi1 / ATCC BAA-1182), this protein is Pyrimidine monooxygenase RutA.